Reading from the N-terminus, the 259-residue chain is Thiazole synthase (259 aa).

Lys99 functions as the Schiff-base intermediate with DXP in the catalytic mechanism. Residues Gly161, 187-188, and 209-219 each bind 1-deoxy-D-xylulose 5-phosphate; these read AG and NSAIACAQNPI.

It belongs to the ThiG family. Homotetramer. Forms heterodimers with either ThiH or ThiS.

The protein localises to the cytoplasm. It catalyses the reaction [ThiS sulfur-carrier protein]-C-terminal-Gly-aminoethanethioate + 2-iminoacetate + 1-deoxy-D-xylulose 5-phosphate = [ThiS sulfur-carrier protein]-C-terminal Gly-Gly + 2-[(2R,5Z)-2-carboxy-4-methylthiazol-5(2H)-ylidene]ethyl phosphate + 2 H2O + H(+). It participates in cofactor biosynthesis; thiamine diphosphate biosynthesis. Catalyzes the rearrangement of 1-deoxy-D-xylulose 5-phosphate (DXP) to produce the thiazole phosphate moiety of thiamine. Sulfur is provided by the thiocarboxylate moiety of the carrier protein ThiS. In vitro, sulfur can be provided by H(2)S. The chain is Thiazole synthase from Aliarcobacter butzleri (strain RM4018) (Arcobacter butzleri).